A 152-amino-acid chain; its full sequence is Lipoprotein signal peptidase (152 aa).

2 consecutive transmembrane segments (helical) span residues N55 to M75 and L85 to F105. Catalysis depends on residues D111 and D129. Residues V124 to L144 form a helical membrane-spanning segment.

Belongs to the peptidase A8 family.

It localises to the cell membrane. It carries out the reaction Release of signal peptides from bacterial membrane prolipoproteins. Hydrolyzes -Xaa-Yaa-Zaa-|-(S,diacylglyceryl)Cys-, in which Xaa is hydrophobic (preferably Leu), and Yaa (Ala or Ser) and Zaa (Gly or Ala) have small, neutral side chains.. It participates in protein modification; lipoprotein biosynthesis (signal peptide cleavage). Functionally, this protein specifically catalyzes the removal of signal peptides from prolipoproteins. The chain is Lipoprotein signal peptidase from Bacillus cereus (strain ZK / E33L).